The sequence spans 160 residues: Phosphopantetheine adenylyltransferase (160 aa).

Thr11 contacts substrate. ATP contacts are provided by residues 11–12 and His19; that span reads TF. Residues Lys43, Thr75, and Arg89 each coordinate substrate. Residues 90–92, Glu100, and 125–131 each bind ATP; these read GLR and YSFLSSS.

The protein belongs to the bacterial CoaD family. As to quaternary structure, homohexamer. It depends on Mg(2+) as a cofactor.

The protein localises to the cytoplasm. It carries out the reaction (R)-4'-phosphopantetheine + ATP + H(+) = 3'-dephospho-CoA + diphosphate. The protein operates within cofactor biosynthesis; coenzyme A biosynthesis; CoA from (R)-pantothenate: step 4/5. In terms of biological role, reversibly transfers an adenylyl group from ATP to 4'-phosphopantetheine, yielding dephospho-CoA (dPCoA) and pyrophosphate. This chain is Phosphopantetheine adenylyltransferase, found in Listeria monocytogenes serovar 1/2a (strain ATCC BAA-679 / EGD-e).